The primary structure comprises 1143 residues: DNA-directed RNA polymerase subunit beta (1143 aa).

The protein belongs to the RNA polymerase beta chain family. In plastids the minimal PEP RNA polymerase catalytic core is composed of four subunits: alpha, beta, beta', and beta''. When a (nuclear-encoded) sigma factor is associated with the core the holoenzyme is formed, which can initiate transcription.

The protein resides in the plastid. Its subcellular location is the chloroplast. The catalysed reaction is RNA(n) + a ribonucleoside 5'-triphosphate = RNA(n+1) + diphosphate. Functionally, DNA-dependent RNA polymerase catalyzes the transcription of DNA into RNA using the four ribonucleoside triphosphates as substrates. In Porphyra purpurea (Red seaweed), this protein is DNA-directed RNA polymerase subunit beta.